A 359-amino-acid polypeptide reads, in one-letter code: C-X-C chemokine receptor type 4 (359 aa).

The segment at Met1–Tyr23 is important for chemokine binding and signaling. Residues Met1–Arg40 lie on the Extracellular side of the membrane. Tyr9 is modified (sulfotyrosine). Asn13 carries N-linked (GlcNAc...) asparagine glycosylation. Residue Tyr14 is modified to Sulfotyrosine. O-linked (Xyl...) (chondroitin sulfate) serine glycosylation is present at Ser20. At Tyr23 the chain carries Sulfotyrosine. 2 disulfide bridges follow: Cys30–Cys281 and Cys111–Cys193. Residues Ile41 to Met65 form a helical membrane-spanning segment. Over Gly66–Arg79 the chain is Cytoplasmic. The helical transmembrane segment at Leu80–Met101 threads the bilayer. Residues Trp96–Asp99 are chemokine binding. The Extracellular segment spans residues Ala102–Lys112. Residues Ala113–Ile132 form a helical membrane-spanning segment. Positions His115–Thr119 are chemokine binding. The Cytoplasmic portion of the chain corresponds to Ser133–Lys156. The Important for signaling motif lies at Asp135–Tyr137. An involved in dimerization; when bound to chemokine region spans residues Tyr137 to Pro149. Residues Ala157–Phe176 traverse the membrane as a helical segment. Topologically, residues Ala177–Trp202 are extracellular. The tract at residues Cys193–Tyr197 is chemokine binding, important for signaling. The interval Pro198–Leu217 is involved in dimerization. A helical membrane pass occupies residues Met203–Leu223. The Cytoplasmic segment spans residues Ser224–Thr248. The chain crosses the membrane as a helical span at residues Val249–Ile268. At Asp269–Lys289 the chain is on the extracellular side. The interval Leu273–Gly275 is involved in dimerization. A helical transmembrane segment spans residues Trp290–Tyr309. Over Ala310 to Ser359 the chain is Cytoplasmic. Ser326 and Ser328 each carry phosphoserine. 2 positions are modified to phosphoserine; by PKC and GRK6: Ser331 and Ser332. Positions Ile335–Ser359 are disordered. Ser337 is subject to Phosphoserine; by GRK6. Lys338 is covalently cross-linked (Glycyl lysine isopeptide (Lys-Gly) (interchain with G-Cter in ubiquitin)). Low complexity predominate over residues His344–Ser359. At Ser346 the chain carries Phosphoserine; by GRK6. 2 positions are modified to phosphoserine: Ser355 and Ser358.

The protein belongs to the G-protein coupled receptor 1 family. Monomer. Can form homodimers. Interacts with CD164. Interacts with ARRB2; the interaction is dependent on the C-terminal phosphorylation of CXCR4 and allows activation of MAPK1 and MAPK3. Interacts with ARR3; the interaction is dependent on the C-terminal phosphorylation of CXCR4 and modulates calcium mobilization. Interacts with RNF113A; the interaction, enhanced by CXCL12, promotes CXCR4 ubiquitination and subsequent degradation. Interacts (via the cytoplasmic C-terminal) with ITCH (via the WW domains I and II); the interaction, enhanced by CXCL12, promotes CXCR4 ubiquitination and leads to its degradation. Interacts with extracellular ubiquitin. Interacts with DBN1; this interaction is enhanced by antigenic stimulation. Following LPS binding, may form a complex with GDF5, HSP90AA1 and HSPA8. In terms of processing, phosphorylated on agonist stimulation. Rapidly phosphorylated on serine and threonine residues in the C-terminal. Phosphorylation at Ser-331 and Ser-332 leads to recruitment of ITCH, ubiquitination and protein degradation. Ubiquitinated after ligand binding, leading to its degradation. Ubiquitinated by ITCH at the cell membrane on agonist stimulation. The ubiquitin-dependent mechanism, endosomal sorting complex required for transport (ESCRT), then targets CXCR4 for lysosomal degradation. This process is dependent also on prior Ser-/Thr-phosphorylation in the C-terminal of CXCR4. Also binding of ARRB1 to STAM negatively regulates CXCR4 sorting to lysosomes though modulating ubiquitination of SFR5S. Post-translationally, sulfation is required for efficient binding of CXCL12/SDF-1alpha and promotes its dimerization. In terms of processing, O- and N-glycosylated. N-glycosylation can mask coreceptor function. The O-glycosylation chondroitin sulfate attachment does not affect interaction with CXCL12/SDF-1alpha nor its coreceptor activity. Lymphocytes, macrophages, neutrophils, microglial cells and astrocytes. Found in spleen, thymus, bone marrow, lymph nodes and, at lower levels in brain, small intestine, stomach and kidney. CXCR4-A is predominant in all tissues tested. During embryonic development, high levels are detected in the endothelium of developing blood vessels and in many regions of the developing brain including the olfactory epithelium, olfactory bulb, hippocampus, cerebellum and spinal cord.

The protein localises to the cell membrane. Its subcellular location is the cell junction. The protein resides in the early endosome. It is found in the late endosome. It localises to the lysosome. Functionally, receptor for the C-X-C chemokine CXCL12/SDF-1 that transduces a signal by increasing intracellular calcium ion levels and enhancing MAPK1/MAPK3 activation. Involved in the AKT signaling cascade. Plays a role in regulation of cell migration, e.g. during wound healing. Acts as a receptor for extracellular ubiquitin; leading to enhanced intracellular calcium ions and reduced cellular cAMP levels. Binds bacterial lipopolysaccharide (LPS) et mediates LPS-induced inflammatory response, including TNF secretion by monocytes. Involved in hematopoiesis and in cardiac ventricular septum formation. Also plays an essential role in vascularization of the gastrointestinal tract, probably by regulating vascular branching and/or remodeling processes in endothelial cells. Involved in cerebellar development. In the CNS, could mediate hippocampal-neuron survival. This chain is C-X-C chemokine receptor type 4 (Cxcr4), found in Mus musculus (Mouse).